Here is a 352-residue protein sequence, read N- to C-terminus: Ribosomal RNA large subunit methyltransferase M (352 aa).

Residues Ser184, 217-220, Asp236, Asp256, and Asp272 each bind S-adenosyl-L-methionine; that span reads APGG. Lys301 acts as the Proton acceptor in catalysis.

The protein belongs to the class I-like SAM-binding methyltransferase superfamily. RNA methyltransferase RlmE family. RlmM subfamily. In terms of assembly, monomer.

It is found in the cytoplasm. It carries out the reaction cytidine(2498) in 23S rRNA + S-adenosyl-L-methionine = 2'-O-methylcytidine(2498) in 23S rRNA + S-adenosyl-L-homocysteine + H(+). In terms of biological role, catalyzes the 2'-O-methylation at nucleotide C2498 in 23S rRNA. The sequence is that of Ribosomal RNA large subunit methyltransferase M from Pseudomonas aeruginosa (strain UCBPP-PA14).